The following is a 446-amino-acid chain: GTPase Der (446 aa).

EngA-type G domains are found at residues 2–166 (TVVA…PEAP) and 179–354 (IRVS…RQYN). GTP contacts are provided by residues 8-15 (GRPNVGKS), 55-59 (DTAGF), 118-121 (NKID), 185-192 (GRPNVGKS), 232-236 (DTAGI), and 297-300 (NKWD). The KH-like domain occupies 355–440 (QRVTTGIVNR…PIRLIFRPRQ (86 aa)).

The protein belongs to the TRAFAC class TrmE-Era-EngA-EngB-Septin-like GTPase superfamily. EngA (Der) GTPase family. As to quaternary structure, associates with the 50S ribosomal subunit.

Functionally, GTPase that plays an essential role in the late steps of ribosome biogenesis. This chain is GTPase Der, found in Syntrophobacter fumaroxidans (strain DSM 10017 / MPOB).